Reading from the N-terminus, the 858-residue chain is Heat shock protein 105 kDa (858 aa).

S2 is modified (N-acetylserine). K471 carries the N6-acetyllysine modification. 2 disordered regions span residues 500-585 (KVPT…PPEA) and 801-858 (VNQP…MDLD). A compositionally biased stretch (acidic residues) spans 504 to 515 (EEDDGSSVEADM). Phosphoserine is present on residues S509 and S510. Over residues 533–549 (QQDNSEAGTQPQVQTDG) the composition is skewed to polar residues. S558 carries the phosphoserine modification. 2 stretches are compositionally biased toward basic and acidic residues: residues 564 to 585 (EENK…PPEA) and 806 to 815 (PKIESPKLER). At S810 the chain carries Phosphoserine. T816 is modified (phosphothreonine). Positions 822-834 (LDKKEDLEGKDNF) are enriched in basic and acidic residues.

This sequence belongs to the heat shock protein 70 family. In terms of assembly, interacts with HSPA8/HSC70. Interacts with HSPA1A (via NBD) and HSPA1B (via NBD). Phosphorylation on Ser-509 may be important for regulation of the HSPA8/HSC70 chaperone activity. As to expression, predominantly expressed in the brain and also found in the liver.

The protein resides in the cytoplasm. Functionally, acts as a nucleotide-exchange factor (NEF) for chaperone proteins HSPA1A and HSPA1B, promoting the release of ADP from HSPA1A/B thereby triggering substrate release. Prevents the aggregation of denatured proteins in cells under severe stress, on which the ATP levels decrease markedly. Inhibits HSPA8/HSC70 ATPase and chaperone activities. This chain is Heat shock protein 105 kDa (HSPH1), found in Cricetulus griseus (Chinese hamster).